The following is a 115-amino-acid chain: Ig heavy chain V-III region W3082 (115 aa).

The region spanning 1–114 (EVKLEESGGG…WGQGTLVTVS (114 aa)) is the Ig-like domain. Residues Cys22 and Cys98 are joined by a disulfide bond.

The polypeptide is Ig heavy chain V-III region W3082 (Mus musculus (Mouse)).